Reading from the N-terminus, the 537-residue chain is P2Y purinoceptor 4 (537 aa).

Over 1-49 (MTEDIMATSYPTFLTTPYLPMKLLMNLTNDTEDICVFDEGFKFLLLPVS) the chain is Extracellular. N-linked (GlcNAc...) asparagine glycans are attached at residues Asn-26 and Asn-29. Residues 50 to 70 (YSAVFMVGLPLNIAAMWIFIA) traverse the membrane as a helical segment. The Cytoplasmic segment spans residues 71 to 79 (KMRPWNPTT). The chain crosses the membrane as a helical span at residues 80–100 (VYMFNLALSDTLYVLSLPTLV). Residues 101 to 118 (YYYADKNNWPFGEVLCKL) lie on the Extracellular side of the membrane. The cysteines at positions 116 and 193 are disulfide-linked. A helical membrane pass occupies residues 119–139 (VRFLFYANLYSSILFLTCISV). The Cytoplasmic portion of the chain corresponds to 140–161 (HRYRGVCHPITSLRRMNAKHAY). Residues 162–182 (VICALVWLSVTLCLVPNLIFV) form a helical membrane-spanning segment. Over 183 to 210 (TVSPKVKNTICHDTTRPEDFARYVEYST) the chain is Extracellular. Residues 211–231 (AIMCLLFGIPCLIIAGCYGLM) form a helical membrane-spanning segment. At 232–254 (TRELMKPIVSGNQQTLPSYKKRS) the chain is on the cytoplasmic side. The helical transmembrane segment at 255-275 (IKTIIFVMIAFAICFMPFHIT) threads the bilayer. The Extracellular segment spans residues 276 to 292 (RTLYYYARLLGIKCYAL). A helical membrane pass occupies residues 293–316 (NVINVTYKVTRPLASANSCIDPIL). The Cytoplasmic portion of the chain corresponds to 317-537 (YFLANDRYRR…EKELQNFPKA (221 aa)). The disordered stretch occupies residues 401–505 (NRRSTIKRNS…GEGTSTWNLL (105 aa)). 2 stretches are compositionally biased toward basic and acidic residues: residues 409–423 (NSTD…RHGE) and 431–447 (VVEK…RKTT). The span at 448 to 465 (EQSSKTNAEQDELQTQID) shows a compositional bias: polar residues.

It belongs to the G-protein coupled receptor 1 family.

It localises to the cell membrane. Its function is as follows. Receptor for extracellular ATP, UTP, CTP, GTP and ITP. The activity of this receptor is mediated by G proteins which activate a phosphatidylinositol-calcium second messenger system. May play a key role in the early development of neural tissue. In Xenopus laevis (African clawed frog), this protein is P2Y purinoceptor 4 (p2ry4).